Consider the following 755-residue polypeptide: Bacteriophytochrome (755 aa).

Cysteine 24 is an a tetrapyrrole binding site. The 69-residue stretch at 26–94 (REPIHIPGSI…LQAALPPGCP (69 aa)) folds into the PAS domain. Residues 95-504 (DALQYRATLD…RDTLTGALGE (410 aa)) are chromophore binding domain. Positions 152–316 (NLRALAEVAT…YLGRLLSLQV (165 aa)) constitute a GAF domain. One can recognise a Histidine kinase domain in the interval 529-747 (VISHHMQEPV…TFRCWLPDAG (219 aa)). The residue at position 532 (histidine 532) is a Phosphohistidine; by autocatalysis.

It in the N-terminal section; belongs to the phytochrome family. Contains one covalently linked tetrapyrrole chromophore. Lacks the cysteine conserved in plant phytochromes (at the position of Met-259) that binds chromophore. An engineered sequence used for X-ray crystallography forms a thioether link to biliverdin through Cys-24. The natural sequence can bind phycocyanobilin and phytochromobilin in vitro, but the identity of the natural chromophore is unknown.

It catalyses the reaction ATP + protein L-histidine = ADP + protein N-phospho-L-histidine.. Functionally, photoreceptor which exists in two forms that are reversibly interconvertible by light: the R form that absorbs maximally in the red region of the spectrum and the FR form that absorbs maximally in the far-red region. Also has a slight blue shift for the far-red maximum. Could also absorb green light. May participate in regulating pigment synthesis like the carotenoid deinoxanthin which could protect the bacterium from intense visible light. This chain is Bacteriophytochrome (bphP), found in Deinococcus radiodurans (strain ATCC 13939 / DSM 20539 / JCM 16871 / CCUG 27074 / LMG 4051 / NBRC 15346 / NCIMB 9279 / VKM B-1422 / R1).